Here is a 223-residue protein sequence, read N- to C-terminus: Adenylate kinase 4, mitochondrial (223 aa).

Glycine 15–threonine 20 serves as a coordination point for a ribonucleoside 5'-triphosphate. The interval serine 35 to valine 64 is NMP. The AMP site is built by serine 36 and arginine 41. An N6-succinyllysine modification is found at lysine 60. AMP-binding positions include leucine 62–valine 64, glycine 89–arginine 92, and glutamine 96. Positions arginine 125–aspartate 162 are LID. Residues arginine 126 and valine 135 to tyrosine 136 each bind a ribonucleoside 5'-triphosphate. Arginine 170 is a binding site for AMP. Position 175 is an N6-acetyllysine (lysine 175). An N6-acetyllysine; alternate mark is found at lysine 179 and lysine 186. N6-succinyllysine; alternate is present on residues lysine 179 and lysine 186. Residue threonine 199 participates in a ribonucleoside 5'-triphosphate binding.

The protein belongs to the adenylate kinase family. AK3 subfamily. Monomer. Interacts with SLC25A5/ANT2. As to expression, expressed in the pyramidal cells in the hippocampus.

It is found in the mitochondrion matrix. It catalyses the reaction a ribonucleoside 5'-phosphate + ATP = a ribonucleoside 5'-diphosphate + ADP. It carries out the reaction AMP + ATP = 2 ADP. The enzyme catalyses GTP + AMP = GDP + ADP. The catalysed reaction is CMP + ATP = CDP + ADP. It catalyses the reaction GTP + CMP = CDP + GDP. It carries out the reaction dAMP + ATP = dADP + ADP. The enzyme catalyses dCMP + ATP = dCDP + ADP. The catalysed reaction is a 2'-deoxyribonucleoside 5'-diphosphate + ATP = a 2'-deoxyribonucleoside 5'-triphosphate + ADP. It catalyses the reaction a ribonucleoside 5'-diphosphate + ATP = a ribonucleoside 5'-triphosphate + ADP. It carries out the reaction GDP + ATP = GTP + ADP. The enzyme catalyses CDP + GTP = CTP + GDP. The catalysed reaction is CDP + ATP = CTP + ADP. It catalyses the reaction UDP + ATP = UTP + ADP. It carries out the reaction GTP + UDP = UTP + GDP. The enzyme catalyses dADP + GTP = dATP + GDP. The catalysed reaction is dCDP + GTP = dCTP + GDP. It catalyses the reaction dCDP + ATP = dCTP + ADP. It carries out the reaction dGDP + ATP = dGTP + ADP. The enzyme catalyses dTDP + GTP = dTTP + GDP. The catalysed reaction is dTDP + ATP = dTTP + ADP. Its function is as follows. Broad-specificity mitochondrial nucleoside phosphate kinase involved in cellular nucleotide homeostasis by catalyzing nucleoside-phosphate interconversions. Similar to other adenylate kinases, preferentially catalyzes the phosphorylation of the nucleoside monophosphate AMP with ATP as phosphate donor to produce ADP. Phosphorylates only AMP when using GTP as phosphate donor. In vitro, can also catalyze the phosphorylation of CMP, dAMP and dCMP and use GTP as an alternate phosphate donor. Moreover, exhibits a diphosphate kinase activity, producing ATP, CTP, GTP, UTP, TTP, dATP, dCTP and dGTP from the corresponding diphosphate substrates with either ATP or GTP as phosphate donors. Plays a role in controlling cellular ATP levels by regulating phosphorylation and activation of the energy sensor protein kinase AMPK. Plays a protective role in the cellular response to oxidative stress. This Rattus norvegicus (Rat) protein is Adenylate kinase 4, mitochondrial.